The sequence spans 280 residues: Undecaprenyl-diphosphatase (280 aa).

The next 8 membrane-spanning stretches (helical) occupy residues 3-23 (IILL…EFLP), 45-65 (VDLF…YDYW), 88-108 (QLGL…FTFA), 115-135 (LFNP…IFYV), 150-170 (VSLK…IPGT), 191-211 (AEFS…LDFI), 225-245 (VLGI…RLLV), and 255-275 (IFAW…WGFG).

The protein belongs to the UppP family.

Its subcellular location is the cell inner membrane. The catalysed reaction is di-trans,octa-cis-undecaprenyl diphosphate + H2O = di-trans,octa-cis-undecaprenyl phosphate + phosphate + H(+). Its function is as follows. Catalyzes the dephosphorylation of undecaprenyl diphosphate (UPP). Confers resistance to bacitracin. This Psychrobacter cryohalolentis (strain ATCC BAA-1226 / DSM 17306 / VKM B-2378 / K5) protein is Undecaprenyl-diphosphatase.